Consider the following 591-residue polypeptide: Protein enabled homolog (591 aa).

A WH1 domain is found at 1 to 111 (MSEQSICQAR…SAMMHALEVL (111 aa)). Residues 115-136 (ETGPTLPRQNSQLPAQVQNGPS) are compositionally biased toward polar residues. Residues 115–146 (ETGPTLPRQNSQLPAQVQNGPSQEELEIQRRQ) are disordered. A Phosphoserine modification is found at S125. A coiled-coil region spans residues 135-265 (PSQEELEIQR…LEWERERRIS (131 aa)). 9 tandem repeats follow at residues 156–160 (LERER), 161–165 (LERER), 166–170 (MERER), 171–175 (LERER), 176–180 (LERER), 181–185 (LERER), 186–190 (LEQEQ), 191–195 (LERER), and 196–200 (QERER). Residues 156-200 (LERERLERERMERERLERERLERERLERERLEQEQLERERQERER) are 9 X 5 AA tandem repeats of [LMQ]-E-[QR]-E-[QR]. Basic and acidic residues predominate over residues 221–264 (RLDRERQERQERERLERLERERQERERQEQLEREQLEWERERRI). A disordered region spans residues 221–379 (RLDRERQERQ…PPLPASGFFL (159 aa)). S265 carries the post-translational modification Phosphoserine; by PKA. Polar residues predominate over residues 275 to 305 (TPLNSVLGDSSASEPGLQAASQPAETPSQQG). 2 stretches are compositionally biased toward pro residues: residues 311 to 323 (LAPP…PPGP) and 330 to 373 (LPPP…PPLP). The segment at 391 to 411 (GLAAAIAGAKLRKVSRMEDTS) is EVH2 block A. The tract at residues 391–588 (GLAAAIAGAK…DAIRQELSKS (198 aa)) is EVH2. The KLKR motif lies at 400-403 (KLRK). The interval 405-549 (SRMEDTSFPS…LSQPSANGVQ (145 aa)) is disordered. A compositionally biased stretch (gly residues) spans 432–443 (RGNGPLPLGGSG). Residues 442-459 (SGLMEEMSALLARRRRIA) are EVH2 block B. Phosphothreonine is present on I465. A phosphoserine mark is found at E471 and E475. Composition is skewed to polar residues over residues 479–491 (PVTS…STPE) and 499–509 (RTNTMNGSKSP). Position 502 is a phosphothreonine (T502). Phosphoserine occurs at positions 506, 508, and 512. Polar residues predominate over residues 538-549 (TPLSQPSANGVQ). Residues 554–588 (DYDRLKQDILDEMRKELTKLKEELIDAIRQELSKS) are EVH2 block C. The stretch at 557 to 587 (RLKQDILDEMRKELTKLKEELIDAIRQELSK) forms a coiled coil.

Belongs to the Ena/VASP family. Homotetramer. Interacts with APBB1IP, APBB1, PFN1 and ROBO4. Isoforms, containing the polyproline-rich regions with PPLP motifs, bind the WW domain of APBB1IP. Isoforms, containing the PPSY motif, bind, in vitro, to the WW2 and WW3 domains of NEDD4 and to the WW1 domain of YAP1. Binds the SH3 domain of BAIAP2-alpha but only after the autoinhibitory region of BAIAP2-alpha has been blocked by interaction with CDC42. Interacts, via the EVH1/WH1 domain, with the Pro-rich domains from VCL, ZYX and Listeria monocytogenes actA and with TES (via LIM domains). The TES LIM domain and the Pro-rich domains from VCL or ZYX compete for the same binding site. Interaction with ZYX is important for targeting ENAH to focal adhesions and enhances production of actin-rich structures at the apical surface of cells. Interacts, through the Pro-rich region, with the C-terminal SH3 domain of DNMPB. Binds GPHN. Interacts with FAT1 (via EVH1 domains). Heterotrimer with TES and ACTL7A. Interacts with PRPF40A. NTN1-induced PKA phosphorylation on Ser-265 directly parallels the formation of filopodial protrusions. Expressed in myoepithelia of parotid, breast, bronchial glands and sweat glands. Expressed in colon-rectum muscolaris mucosae epithelium, pancreas acinar ductal epithelium, endometrium epithelium, prostate fibromuscolar stroma and placenta vascular media. Overexpressed in a majority of breast cancer cell lines and primary breast tumor lesions.

It is found in the cytoplasm. It localises to the cytoskeleton. Its subcellular location is the cell projection. The protein localises to the lamellipodium. The protein resides in the filopodium. It is found in the synapse. It localises to the cell junction. Its subcellular location is the focal adhesion. Ena/VASP proteins are actin-associated proteins involved in a range of processes dependent on cytoskeleton remodeling and cell polarity such as axon guidance and lamellipodial and filopodial dynamics in migrating cells. ENAH induces the formation of F-actin rich outgrowths in fibroblasts. Acts synergistically with BAIAP2-alpha and downstream of NTN1 to promote filipodia formation. In Homo sapiens (Human), this protein is Protein enabled homolog (ENAH).